Consider the following 384-residue polypeptide: Glutamate 5-kinase (384 aa).

ATP is bound at residue Lys24. Ser64, Asp149, and Asn161 together coordinate substrate. Residues 181–182 (TD) and 223–229 (TGGMRTK) each bind ATP. The PUA domain maps to 288 to 370 (PGAILIDAGA…RDIQTLLGYT (83 aa)).

This sequence belongs to the glutamate 5-kinase family.

It localises to the cytoplasm. The enzyme catalyses L-glutamate + ATP = L-glutamyl 5-phosphate + ADP. It functions in the pathway amino-acid biosynthesis; L-proline biosynthesis; L-glutamate 5-semialdehyde from L-glutamate: step 1/2. In terms of biological role, catalyzes the transfer of a phosphate group to glutamate to form L-glutamate 5-phosphate. The sequence is that of Glutamate 5-kinase from Xylella fastidiosa (strain M12).